Here is a 342-residue protein sequence, read N- to C-terminus: Trans-3-hydroxy-L-proline dehydratase (342 aa).

S90 serves as the catalytic Proton acceptor. Residues 91-92, D252, and 257-258 contribute to the substrate site; these read GS and GT.

The protein belongs to the proline racemase family.

The catalysed reaction is trans-3-hydroxy-L-proline = 1-pyrroline-2-carboxylate + H2O. Catalyzes the dehydration of trans-3-hydroxy-L-proline (t3LHyp) to Delta(1)-pyrroline-2-carboxylate (Pyr2C). Is likely involved in a degradation pathway that converts t3LHyp to L-proline. Displays neither proline racemase activity nor 4-hydroxyproline 2-epimerase activity. The sequence is that of Trans-3-hydroxy-L-proline dehydratase from Allorhizobium ampelinum (strain ATCC BAA-846 / DSM 112012 / S4) (Agrobacterium vitis (strain S4)).